The chain runs to 155 residues: Endoribonuclease YbeY (155 aa).

3 residues coordinate Zn(2+): His-114, His-118, and His-124.

The protein belongs to the endoribonuclease YbeY family. Zn(2+) serves as cofactor.

The protein resides in the cytoplasm. Functionally, single strand-specific metallo-endoribonuclease involved in late-stage 70S ribosome quality control and in maturation of the 3' terminus of the 16S rRNA. The sequence is that of Endoribonuclease YbeY from Escherichia coli O157:H7.